The chain runs to 340 residues: MTPIVRFESVTKTFSSGKKTLTAVDAVDLTIERGEIFGVIGYSGAGKSTLVRLINGLERPTSGRVVVDDVDITALSESKLRHVRAKIGMIFQQFNLFRSRTVAGNVAYPLVVAGWPRQKRRERVAELLEFVGLSDKARAYPDQLSGGQKQRVGIARALATSPDLLLADESTSALDPETTQDVLRLLRKVNRELGVTIVVITHEMDVVRAVADRVAVLAEGRVVELGTVFDVFSEPQAPASKSFVSTILRNRPEPADLERLRSRFGGRIVTADVRDGSRIGDVLSDAGGHGVRFEIVYGGITTLQDRSFGSLTLELVGPDDGVDDVIRRLRTVTDVEEVQA.

Positions 5 to 244 (VRFESVTKTF…PQAPASKSFV (240 aa)) constitute an ABC transporter domain. Residue 41-48 (GYSGAGKS) participates in ATP binding.

This sequence belongs to the ABC transporter superfamily. Methionine importer (TC 3.A.1.24) family. As to quaternary structure, the complex is composed of two ATP-binding proteins (MetN), two transmembrane proteins (MetI) and a solute-binding protein (MetQ).

Its subcellular location is the cell membrane. The catalysed reaction is L-methionine(out) + ATP + H2O = L-methionine(in) + ADP + phosphate + H(+). It catalyses the reaction D-methionine(out) + ATP + H2O = D-methionine(in) + ADP + phosphate + H(+). In terms of biological role, part of the ABC transporter complex MetNIQ involved in methionine import. Responsible for energy coupling to the transport system. In Rhodococcus jostii (strain RHA1), this protein is Methionine import ATP-binding protein MetN 2.